Consider the following 307-residue polypeptide: Glycine--tRNA ligase alpha subunit (307 aa).

Belongs to the class-II aminoacyl-tRNA synthetase family. Tetramer of two alpha and two beta subunits.

It localises to the cytoplasm. It catalyses the reaction tRNA(Gly) + glycine + ATP = glycyl-tRNA(Gly) + AMP + diphosphate. The sequence is that of Glycine--tRNA ligase alpha subunit from Aeromonas hydrophila subsp. hydrophila (strain ATCC 7966 / DSM 30187 / BCRC 13018 / CCUG 14551 / JCM 1027 / KCTC 2358 / NCIMB 9240 / NCTC 8049).